Reading from the N-terminus, the 2170-residue chain is ATP-binding cassette sub-family A member 7 (2170 aa).

A helical transmembrane segment spans residues 22-42 (PIQLVVELLWPLFLFFILVAV). The Extracellular portion of the chain corresponds to 43-547 (RHSHPPLEHH…DVFLRVLSRS (505 aa)). Cysteines 75 and 222 form a disulfide. N-linked (GlcNAc...) asparagine glycosylation is present at N309. The next 6 membrane-spanning stretches (helical) occupy residues 548–568 (LPLFLTLAWIYSVALTVKAVV), 591–611 (LGWFLSCLGPFLVSAALLVLV), 624–644 (VVVFLFLAAFAVATVAQSFLL), 653–673 (LAAACGGLAYFALYLPYVLCV), 679–699 (LPLGGLLAVSLLSPVAFGFGC), and 733–753 (AFLLLDAVIYGLALWYLEAVC). The 232-residue stretch at 805–1036 (VSIRGLKKHF…LGCGYYLTLV (232 aa)) folds into the ABC transporter 1 domain. 839 to 846 (GHNGAGKT) provides a ligand contact to ATP. The chain crosses the membrane as a helical span at residues 847-867 (TTLSILSGLFPPSSGSASILG). The disordered stretch occupies residues 1044–1086 (THDLKGDTEDPRREKKSGSEGKTADTVLTRDGPHRSSQVPAPD). Positions 1045–1066 (HDLKGDTEDPRREKKSGSEGKT) are enriched in basic and acidic residues. Residues 1257–1277 (IVLPALFVGLALFFTLIVPPF) traverse the membrane as a helical segment. Over 1278–1562 (GQYPPLQLSP…TLIASSVDVL (285 aa)) the chain is Extracellular. A disulfide bond links C1370 and C1384. 6 helical membrane passes run 1563–1583 (VSICVVFAMSFVPASFTLVLI), 1609–1629 (FLWDMCNYLVAVCIVVLIFLA), 1646–1666 (LLLLLYGWSITPLMYPASFFF), 1674–1694 (VVLTCINLFIGINSSMATFVL), 1708–1728 (ILKQVFLIFPHFCLGRGLIDM), and 1754–1774 (IIGKNLLAMVAQGPLFLLITL). The ABC transporter 2 domain maps to 1818-2050 (LVLRDLTKVY…FGAGHTLTLR (233 aa)). 1852–1859 (GVNGAGKT) contributes to the ATP binding site. A disordered region spans residues 2129-2170 (QGEEEEGSGQETETREVSTPGLQHPKRVSRFLEDPSSVETVI).

This sequence belongs to the ABC transporter superfamily. ABCA family. Post-translationally, N-glycosylated. As to expression, expressed in blood cells. Also detected in brain and ovary tissues (at protein level). Expressed in platelet.

The protein localises to the cell membrane. It is found in the golgi apparatus membrane. It localises to the early endosome membrane. Its subcellular location is the cell projection. The protein resides in the ruffle membrane. The protein localises to the phagocytic cup. It is found in the cytoplasm. ATP-binding cassette (ABC) transporter that plays a role in lipid homeostasis and macrophage-mediated phagocytosis. Binds APOA1 and may function in apolipoprotein-mediated phospholipid efflux from cells. May also mediate cholesterol efflux. May regulate cellular ceramide homeostasis during keratinocyte differentiation. Involved in lipid raft organization and CD1D localization on thymocytes and antigen-presenting cells, which plays an important role in natural killer T-cell development and activation. Plays a role in phagocytosis of apoptotic cells by macrophages. Macrophage phagocytosis is stimulated by APOA1 or APOA2, probably by stabilization of ABCA7. Also involved in phagocytic clearance of amyloid-beta by microglia cells and macrophages. Further limits amyloid-beta production by playing a role in the regulation of amyloid-beta A4 precursor protein (APP) endocytosis and/or processing. This Rattus norvegicus (Rat) protein is ATP-binding cassette sub-family A member 7 (Abca7).